We begin with the raw amino-acid sequence, 627 residues long: Coiled-coil domain-containing protein 22 (627 aa).

The tract at residues M1–R321 is sufficient for interaction with COMMD1. The sufficicient and required for interaction with CCDC93 stretch occupies residues M1 to S447. A Phosphoserine modification is found at S410. A coiled-coil region spans residues R448–T535.

The protein belongs to the CCDC22 family. As to quaternary structure, component of the commander complex consisting of the CCC subcomplex and the retriever subcomplex. Component of the CCC (COMMD/CCDC22/CCDC93) subcomplex consisting of COMMD1, COMMD2, COMMD3, COMMD4, COMMD5, COMMD6, COMMD7, COMMD8, COMMD9, COMMD10, CCDC22 and CCDC93. Forms a coiled-coil heterodimer with CCDC22; this heterodimer interacts with the guanine nucleotide exchange factor DENND10; the interaction is direct. Interacts with CUL1, CUL2, CUL3, SKP1, BTRC. Interacts with SNX17 and SNX31. Interacts with CPNE1 and CPNE4.

It is found in the endosome. It localises to the cytoplasm. Its subcellular location is the cytoskeleton. The protein resides in the microtubule organizing center. The protein localises to the centrosome. Its function is as follows. Component of the commander complex that is essential for endosomal recycling of transmembrane cargos; the Commander complex is composed of composed of the CCC subcomplex and the retriever subcomplex. Component of the CCC complex, which is involved in the regulation of endosomal recycling of surface proteins, including integrins, signaling receptor and channels. Involved in regulation of NF-kappa-B signaling. Promotes ubiquitination of I-kappa-B-kinase subunit IKBKB and its subsequent proteasomal degradation leading to NF-kappa-B activation; the function may involve association with COMMD8 and a CUL1-dependent E3 ubiquitin ligase complex. May down-regulate NF-kappa-B activity via association with COMMD1 and involving a CUL2-dependent E3 ubiquitin ligase complex. Regulates the cellular localization of COMM domain-containing proteins, such as COMMD1 and COMMD10. Component of the CCC complex, which is involved in the regulation of endosomal recycling of surface proteins, including integrins, signaling receptor and channels. The CCC complex associates with SNX17, retriever and WASH complexes to prevent lysosomal degradation and promote cell surface recycling of numerous cargos such as integrins ITGA5:ITGB1. Plays a role in copper ion homeostasis. Involved in copper-dependent ATP7A trafficking between the trans-Golgi network and vesicles in the cell periphery; the function is proposed to depend on its association within the CCC complex and cooperation with the WASH complex on early endosomes. The sequence is that of Coiled-coil domain-containing protein 22 (Ccdc22) from Mus musculus (Mouse).